A 169-amino-acid polypeptide reads, in one-letter code: S-ribosylhomocysteine lyase (169 aa).

The Fe cation site is built by His-54, His-58, and Cys-128.

Belongs to the LuxS family. In terms of assembly, homodimer. Requires Fe cation as cofactor.

It carries out the reaction S-(5-deoxy-D-ribos-5-yl)-L-homocysteine = (S)-4,5-dihydroxypentane-2,3-dione + L-homocysteine. In terms of biological role, involved in the synthesis of autoinducer 2 (AI-2) which is secreted by bacteria and is used to communicate both the cell density and the metabolic potential of the environment. The regulation of gene expression in response to changes in cell density is called quorum sensing. Catalyzes the transformation of S-ribosylhomocysteine (RHC) to homocysteine (HC) and 4,5-dihydroxy-2,3-pentadione (DPD). The protein is S-ribosylhomocysteine lyase of Shewanella putrefaciens (strain CN-32 / ATCC BAA-453).